Reading from the N-terminus, the 316-residue chain is Transaldolase (316 aa).

The active-site Schiff-base intermediate with substrate is the lysine 132.

The protein belongs to the transaldolase family. Type 1 subfamily. As to quaternary structure, homodimer.

The protein resides in the cytoplasm. The enzyme catalyses D-sedoheptulose 7-phosphate + D-glyceraldehyde 3-phosphate = D-erythrose 4-phosphate + beta-D-fructose 6-phosphate. It participates in carbohydrate degradation; pentose phosphate pathway; D-glyceraldehyde 3-phosphate and beta-D-fructose 6-phosphate from D-ribose 5-phosphate and D-xylulose 5-phosphate (non-oxidative stage): step 2/3. Transaldolase is important for the balance of metabolites in the pentose-phosphate pathway. This chain is Transaldolase, found in Marinomonas sp. (strain MWYL1).